A 509-amino-acid polypeptide reads, in one-letter code: Protein disulfide-isomerase (509 aa).

A signal peptide spans 1–19 (MLSRALLCLALAWAARVGA). Residues 20–136 (DALEEEDNVL…IVNWLKKRTG (117 aa)) enclose the Thioredoxin 1 domain. Residues Cys55 and Cys58 each act as nucleophile in the active site. Cys55 and Cys58 are disulfide-bonded. Lys202 bears the N6-acetyllysine mark. Lys224 and Lys273 each carry N6-succinyllysine. 2 positions are modified to phosphoserine: Ser333 and Ser359. One can recognise a Thioredoxin 2 domain in the interval 335–477 (ELTAEKITQF…FKKFLESGGQ (143 aa)). Active-site nucleophile residues include Cys399 and Cys402. An intrachain disulfide couples Cys399 to Cys402. Phosphoserine is present on Ser429. The Prevents secretion from ER signature appears at 506–509 (KDEL).

This sequence belongs to the protein disulfide isomerase family. In terms of assembly, heterodimer; heterodimerizes with the protein microsomal triglyceride transfer MTTP. Homodimer. Monomers and homotetramers may also occur. Interacts with P4HA2, forming a heterotetramer consisting of 2 alpha subunits (P4HA2) and 2 beta (P4HB), where P4HB plays the role of a structural subunit; this tetramer catalyzes the formation of 4-hydroxyproline in collagen. Also constitutes the structural subunit of the microsomal triacylglycerol transfer protein MTTP in mammalian cells. Stabilizes both enzymes and retain them in the ER without contributing to the catalytic activity. Binds UBQLN1. Interacts with ERO1B. Interacts with ILDR2. Interacts with ERN1/IRE1A (via N-terminus); the interaction is enhanced by phosphorylation of P4HB by FAM20C in response to endoplasmic reticulum stress and results in attenuation of ERN1 activity. Phosphorylation of Ser-359 by FAM20C is induced by endoplasmic reticulum stress and results in a functional switch from oxidoreductase to molecular chaperone. It also promotes interaction with ERN1.

Its subcellular location is the endoplasmic reticulum. It is found in the endoplasmic reticulum lumen. It localises to the melanosome. The protein resides in the cell membrane. The catalysed reaction is Catalyzes the rearrangement of -S-S- bonds in proteins.. Functionally, this multifunctional protein catalyzes the formation, breakage and rearrangement of disulfide bonds. At the cell surface, seems to act as a reductase that cleaves disulfide bonds of proteins attached to the cell. May therefore cause structural modifications of exofacial proteins. Inside the cell, seems to form/rearrange disulfide bonds of nascent proteins. At high concentrations and following phosphorylation by FAM20C, functions as a chaperone that inhibits aggregation of misfolded proteins. At low concentrations, facilitates aggregation (anti-chaperone activity). May be involved with other chaperones in the structural modification of the TG precursor in hormone biogenesis. Also acts as a structural subunit of various enzymes such as prolyl 4-hydroxylase and microsomal triacylglycerol transfer protein MTTP. Receptor for LGALS9; the interaction retains P4HB at the cell surface of Th2 T helper cells, increasing disulfide reductase activity at the plasma membrane, altering the plasma membrane redox state and enhancing cell migration. The protein is Protein disulfide-isomerase (P4hb) of Rattus norvegicus (Rat).